Here is a 522-residue protein sequence, read N- to C-terminus: Transactivator/viroplasmin protein (522 aa).

Residues 488 to 522 form a disordered region; that stretch reads DASADEGTTDKSGPPPTRSIVEKEDVPNTSSKQVD.

This sequence belongs to the caulimoviridae viroplasmin family.

It localises to the host cytoplasm. In terms of biological role, enhances the ribosomal termination-reinitiation event leading to the translation of major open reading frames on the polycistronic viral RNAs. The chain is Transactivator/viroplasmin protein from Cauliflower mosaic virus (strain D/H) (CaMV).